Consider the following 79-residue polypeptide: Sperm-specific basic nuclear protein SP4 (79 aa).

Residues 1-79 form a disordered region; the sequence is MSKVSGGSRR…ARDYGSDYRS (79 aa). Residues 9–60 are compositionally biased toward basic residues; sequence RRTRARRPMSNRRGRRSQSAAHRSRAQRRRRRTGTTRRARTSTARRARTRTA. 2 repeats span residues 45–52 and 53–60; these read RRARTSTA and RRARTRTA. Basic and acidic residues predominate over residues 61–79; sequence RRSDLTRMMARDYGSDYRS.

It is found in the nucleus. The sequence is that of Sperm-specific basic nuclear protein SP4 (sp4-a) from Xenopus laevis (African clawed frog).